The chain runs to 2339 residues: Voltage-dependent N-type calcium channel subunit alpha-1B (2339 aa).

Topologically, residues 1 to 90 (MVRFGDELGG…DNVVRKYAKR (90 aa)) are cytoplasmic. The segment covering 15 to 34 (AGGAERARGGGAGGAGGPGP) has biased composition (gly residues). The disordered stretch occupies residues 15 to 37 (AGGAERARGGGAGGAGGPGPGGL). Arginine 22 carries the omega-N-methylarginine modification. The I repeat unit spans residues 82 to 359 (NVVRKYAKRI…LVLGVLSGEF (278 aa)). Residues 91-114 (ITEWPPFEYMILATIIANCIVLAL) traverse the membrane as a helical segment. At 115 to 131 (EQHLPDGDKTPMSERLD) the chain is on the extracellular side. Residues 132-152 (DTEPYFIGIFCFEAGIKILAL) traverse the membrane as a helical segment. The Cytoplasmic portion of the chain corresponds to 153–163 (GFVLHKGSYLR). The chain crosses the membrane as a helical span at residues 164-182 (NGWNVMDFVVVLTGILATA). The Extracellular segment spans residues 183-187 (GTDFD). Residues 188–211 (LRTLRAVRVLRPLKLVSGIPSLQV) form a helical membrane-spanning segment. The Cytoplasmic portion of the chain corresponds to 212-221 (VLKSIMKAMV). Residues 222–244 (PLLQIGLLLFFAILMFAIIGLEF) traverse the membrane as a helical segment. Over 245-331 (YMGKFHKACF…NTNDAAGNTW (87 aa)) the chain is Extracellular. Residue asparagine 256 is glycosylated (N-linked (GlcNAc...) asparagine). Residues 332–356 (NWLYFIPLIIIGSFFMLNLVLGVLS) traverse the membrane as a helical segment. The Cytoplasmic segment spans residues 357 to 483 (GEFAKERERV…FFIRRMVKAQ (127 aa)). The binding to the beta subunit stretch occupies residues 379-396 (QQIERELNGYLEWIFKAE). Serine 411 carries the phosphoserine modification. Residue 452 to 459 (ASLKSGKT) participates in ATP binding. The II repeat unit spans residues 469-713 (EKMFRFFIRR…VFLAIAVDNL (245 aa)). A helical transmembrane segment spans residues 484-502 (SFYWTVLCVVALNTLCVAM). Over 503 to 512 (VHYNQPQRLT) the chain is Extracellular. A helical transmembrane segment spans residues 513-535 (TALYFAEFVFLGLFLTEMSLKMY). Topologically, residues 536–545 (GLGPRSYFRS) are cytoplasmic. Position 545 (serine 545) interacts with a 1,2-diacyl-sn-glycero-3-phospho-(1D-myo-inositol-4,5-bisphosphate). A helical transmembrane segment spans residues 546 to 567 (SFNCFDFGVIVGSIFEVVWAAV). The Extracellular portion of the chain corresponds to 568–574 (KPGTSFG). Residues 575–587 (ISVLRALRLLRIF) traverse the membrane as a helical segment. Positions 585 and 588 each coordinate a 1,2-diacyl-sn-glycero-3-phospho-(1D-myo-inositol-4,5-bisphosphate). Residues 588 to 605 (KVTKYWNSLRNLVVSLLN) are Cytoplasmic-facing. A helical transmembrane segment spans residues 606-631 (SMKSIISLLFLLFLFIVVFALLGMQL). Residues 632-683 (FGGQFNFKDETPTTNFDTFPAAILTVFQILTGEDWNAVMYHGIESQGGVSRG) are Extracellular-facing. The helical transmembrane segment at 684-710 (MFSSFYFIVLTLFGNYTLLNVFLAIAV) threads the bilayer. Over 711 to 1156 (DNLANAQELT…CCHYIVTMRY (446 aa)) the chain is Cytoplasmic. Phosphoserine occurs at positions 746, 749, and 784. 5 stretches are compositionally biased toward basic and acidic residues: residues 809–827 (DVKTHLDRPLVVEPGRDAP), 870–891 (EQDRAEALRAEGGELGPREERG), 927–937 (GSPEEAAEREP), 973–984 (CPREAESSEEPA), and 999–1026 (TAEKDKEAAEKGGEATEAEKDKEARNHQ). Disordered regions lie at residues 809 to 1026 (DVKT…RNHQ) and 1056 to 1084 (VEEQPEDADNQRNVTRMGSQPPDTSTTVH). The segment covering 1066–1083 (QRNVTRMGSQPPDTSTTV) has biased composition (polar residues). Position 1074 is a phosphoserine (serine 1074). The stretch at 1142 to 1424 (NLLRRCCHYI…IFVALIIITF (283 aa)) is one III repeat. The chain crosses the membrane as a helical span at residues 1157-1175 (FEMVILVVIALSSIALAAE). Residues 1176–1183 (DPVRTDSP) are Extracellular-facing. A helical membrane pass occupies residues 1184 to 1208 (RNNALKYMDYIFTGVFTFEMVIKMI). At 1209–1222 (DLGLLLHPGAYFRD) the chain is on the cytoplasmic side. A helical membrane pass occupies residues 1223 to 1243 (LWNILDFIVVSGALVAFAFSG). The Extracellular segment spans residues 1244–1249 (SKGKDI). The chain crosses the membrane as a helical span at residues 1250 to 1270 (STIKSLRVLRVLRPLKTIKRL). The Cytoplasmic portion of the chain corresponds to 1271 to 1288 (PKLKAVFDCVVNSLKNVL). Residues 1289-1308 (NILIVYMLFMFIFAVIAVQL) traverse the membrane as a helical segment. The Extracellular segment spans residues 1309–1395 (FKGKFFYCTD…EQGPSPGYRM (87 aa)). The helical transmembrane segment at 1396-1421 (ELSIFYVVYFVVFPFFFVNIFVALII) threads the bilayer. The Cytoplasmic segment spans residues 1422 to 1476 (ITFQEQGDKVMSECSLEKNERACIDFAISARPLTRYMPQNKQSFQYKTWTFVVSP). One copy of the IV repeat lies at 1461-1714 (NKQSFQYKTW…LFVAVIMDNF (254 aa)). A helical transmembrane segment spans residues 1477–1495 (PFEYFIMAMIALNTVVLMM). At 1496–1503 (KFYDAPYE) the chain is on the extracellular side. A helical membrane pass occupies residues 1504–1528 (YELMLKCLNIVFTSMFSMECVLKII). Residues 1529–1538 (AFGVLNYFRD) lie on the Cytoplasmic side of the membrane. The helical transmembrane segment at 1539–1560 (AWNVFDFVTVLGSITDILVTEI) threads the bilayer. The Extracellular portion of the chain corresponds to 1561-1566 (ANNFIN). Asparagine 1566 is a glycosylation site (N-linked (GlcNAc...) asparagine). A helical membrane pass occupies residues 1567–1585 (LSFLRLFRAARLIKLLRQG). The Cytoplasmic portion of the chain corresponds to 1586 to 1604 (YTIRILLWTFVQSFKALPY). The helical transmembrane segment at 1605–1624 (VCLLIAMLFFIYAIIGMQVF) threads the bilayer. Residues 1625–1686 (GNIALDDDTS…SNASECGSDF (62 aa)) lie on the Extracellular side of the membrane. N-linked (GlcNAc...) asparagine glycosylation occurs at asparagine 1678. A helical membrane pass occupies residues 1687–1710 (AYFYFVSFIFLCSFLMLNLFVAVI). Residues 1711-2339 (MDNFEYLTRD…CHHPDRDRRC (629 aa)) lie on the Cytoplasmic side of the membrane. Positions 1727–1762 (HHLDEFIRVWAEYDPAACGRISYSDMFEMLKHMSPP) constitute an EF-hand domain. Aspartate 1740, arginine 1746, and aspartate 1751 together coordinate Ca(2+). Residues 1983-2312 (TLSGPDAEPQ…QPPPLRRVPN (330 aa)) form a disordered region. Basic residues predominate over residues 2050–2064 (PHHHHHRCHRRRDRK). Serine 2067 carries the post-translational modification Phosphoserine. The segment covering 2099–2136 (CRRERERRQERGRSQERRQPSSSSSEKHRFYSCDRFGG) has biased composition (basic and acidic residues). Polar residues-rich tracts occupy residues 2144–2155 (PSLSSHPTSPTA) and 2165–2181 (GSGSVHGSPLLSTSGAS). Phosphoserine is present on residues serine 2224, serine 2233, and serine 2256. Positions 2286 to 2302 (SNSGRSSRTSYVSSLTS) are enriched in low complexity.

Belongs to the calcium channel alpha-1 subunit (TC 1.A.1.11) family. CACNA1B subfamily. In terms of assembly, multisubunit complex consisting of alpha-1, alpha-2, beta and delta subunits in a 1:1:1:1 ratio. The channel activity is directed by the pore-forming and voltage-sensitive alpha-1 subunit. In many cases, this subunit is sufficient to generate voltage-sensitive calcium channel activity. The auxiliary subunits beta and alpha-2/delta linked by a disulfide bridge regulate the channel activity. Interacts with RIMS1. Interacts with FMR1 (via C-terminus); this interaction induces a decrease in the number of presynaptic functional CACNA1B channels at the cell surface. Phosphorylated in vitro by CaM-kinase II, PKA, PKC and CGPK. Widespread expression throughout the brain. Highest levels in corpus striatum and midbrain.

Its subcellular location is the membrane. It catalyses the reaction Ca(2+)(in) = Ca(2+)(out). Is specifically blocked by omega-conotoxin GVIA. Is specifically blocked by omega-conotoxin MVIIA (ziconotide). Is insensitive to dihydropyridines (DHP). Functionally, voltage-sensitive calcium channels (VSCC) mediate the entry of calcium ions into excitable cells and are also involved in a variety of calcium-dependent processes, including muscle contraction, hormone or neurotransmitter release, gene expression, cell motility, cell division and cell death. This alpha-1B subunit gives rise to N-type calcium currents. N-type calcium channels belong to the 'high-voltage activated' (HVA) group. They are involved in pain signaling. Calcium channels containing alpha-1B subunit may play a role in directed migration of immature neurons. Mediates Ca(2+) release probability at hippocampal neuronal soma and synaptic terminals. The polypeptide is Voltage-dependent N-type calcium channel subunit alpha-1B (CACNA1B) (Oryctolagus cuniculus (Rabbit)).